A 609-amino-acid chain; its full sequence is Protein alan shepard (609 aa).

The segment covering 1–12 has biased composition (pro residues); sequence MHPRYSPAPPPL. A disordered region spans residues 1 to 96; the sequence is MHPRYSPAPP…ASVAAAPPTP (96 aa). Y5 carries the post-translational modification Phosphotyrosine. Low complexity predominate over residues 13–35; that stretch reads HQQQQQQPPQQQQQQMGGPHQQQ. Positions 37-50 are enriched in gly residues; the sequence is GGVGPGTGHGGVGA. 2 stretches are compositionally biased toward low complexity: residues 51 to 68 and 83 to 92; these read AVGASNAGHMRAPPNSQQ and SSSAASVAAA. Phosphotyrosine occurs at positions 152 and 168. A disordered region spans residues 190 to 252; sequence PATTTYGQRV…AQNQNQQGGE (63 aa). The span at 204–252 shows a compositional bias: low complexity; that stretch reads SPSNTNSSSSSNTGSQSGTLSTSLSNTTNTNTTMGPNGTAQNQNQQGGE. RRM domains lie at 257–330 and 336–415; these read TNLY…MAKQ and TNLY…FADG. The tract at residues 583–609 is disordered; that stretch reads MTDSEQASTAASPDEAYTQYPHQAAPK.

Its function is as follows. Has a role in the perception of gravity. This chain is Protein alan shepard, found in Drosophila grimshawi (Hawaiian fruit fly).